The sequence spans 187 residues: Flavin prenyltransferase UbiX (187 aa).

FMN-binding positions include 9–11 (GAS), serine 34, and arginine 123. Dimethylallyl phosphate is bound by residues tyrosine 153 and lysine 169.

This sequence belongs to the UbiX/PAD1 family.

The catalysed reaction is dimethylallyl phosphate + FMNH2 = prenylated FMNH2 + phosphate. Its function is as follows. Flavin prenyltransferase that catalyzes the synthesis of the prenylated FMN cofactor (prenyl-FMN) for 4-hydroxy-3-polyprenylbenzoic acid decarboxylase UbiD. The prenyltransferase is metal-independent and links a dimethylallyl moiety from dimethylallyl monophosphate (DMAP) to the flavin N5 and C6 atoms of FMN. The sequence is that of Flavin prenyltransferase UbiX from Helicobacter pylori (strain J99 / ATCC 700824) (Campylobacter pylori J99).